The sequence spans 152 residues: MHQVIQLKILDSRIGDTIPLPAYATDGSAGLDLRVCISEPMQVAPQQTVLLPTGIAIYIADPKLAAVILPRSGLGHKNGIVLGNLVGLIDSDYQGELKISCWNRSQEHFTVNPGDRIAQLVFIPVVQTSFEVVNEFTESSRGEGGFGSSGRY.

Residues 71-73 (RSG), Asn84, 88-90 (LID), and Lys98 contribute to the substrate site.

The protein belongs to the dUTPase family. Requires Mg(2+) as cofactor.

It carries out the reaction dUTP + H2O = dUMP + diphosphate + H(+). It participates in pyrimidine metabolism; dUMP biosynthesis; dUMP from dCTP (dUTP route): step 2/2. Functionally, this enzyme is involved in nucleotide metabolism: it produces dUMP, the immediate precursor of thymidine nucleotides and it decreases the intracellular concentration of dUTP so that uracil cannot be incorporated into DNA. The chain is Deoxyuridine 5'-triphosphate nucleotidohydrolase from Legionella pneumophila (strain Paris).